The primary structure comprises 163 residues: MSARPDQSRTAAPSATTSPVEIYCDGACSGNPGPGGYGAILRYNGHEKEIRGSEAHTTNNRMELTAAMEALRLLTRPCRITIVTDSQYLVKGMTEWIQGWQRRGWQNSKKEPVLNRDLWEELLKLSAHHDVSWQWIRGHAGHAENERCDSLARQAITEMRGAP.

The RNase H type-1 domain maps to 16–157; it reads TTSPVEIYCD…CDSLARQAIT (142 aa). Residues Asp25, Glu63, Asp85, and Asp149 each contribute to the Mg(2+) site.

This sequence belongs to the RNase H family. Monomer. It depends on Mg(2+) as a cofactor.

The protein resides in the cytoplasm. The enzyme catalyses Endonucleolytic cleavage to 5'-phosphomonoester.. Endonuclease that specifically degrades the RNA of RNA-DNA hybrids. This chain is Ribonuclease H, found in Pelobacter propionicus (strain DSM 2379 / NBRC 103807 / OttBd1).